Consider the following 346-residue polypeptide: MVGGGAKRRLRGEGPQCEKPVDMKKSKSCEADVPGDLRKEVESHYRLPLPEDFYHFWRFCEGLDPEQPADSLSASLGLRLVGPYDILAGKHKIKKKSASLNFNLHWRFYYDPPEFQTIIIGDSKTQFHMGYFRDSPDELPVFVGTNEAKKNCIIVQSGDNVFAAVKLFLMKKLKEVTDKKKSSLLKTIDEKLTEAARELGFSLEQRTVRMKQRDKKVVTKTFHGAGLVVPVDKNDVGYRELPETDASLRRICGTIVEAPSDADRLQAFAPVQEMMTYVQFANDECDYGMGLELGLDLFCHGSHYFHKVAGQLLPLAYNLLKRNLFAEIIEAHLANRSQDDVDQLAA.

Met-1 bears the N-acetylmethionine mark. A compositionally biased stretch (basic residues) spans 1–10 (MVGGGAKRRL). Residues 1-29 (MVGGGAKRRLRGEGPQCEKPVDMKKSKSC) form a disordered region. At Lys-19 the chain carries N6-acetyllysine. The segment covering 19-29 (KPVDMKKSKSC) has biased composition (basic and acidic residues). Ser-97 is subject to ADP-ribosylserine. N6-acetyllysine is present on residues Lys-186 and Lys-233. Asp-235 is modified (polyADP-ribosyl aspartic acid). Tyr-238 bears the ADP-ribosyltyrosine mark. Glu-240 is subject to PolyADP-ribosyl glutamic acid. Residues 242-346 (PETDASLRRI…SQDDVDQLAA (105 aa)) form an interaction with PARP1 region. The Proton donor role is filled by Glu-284.

It belongs to the HPF1 family. Interacts with PARP1 (via the PARP catalytic domain). Interacts with PARP2 (via the PARP catalytic domain). Interacts with core nucleosomes in a PARP1- and PARP2-dependent manner.

The protein resides in the chromosome. It localises to the nucleus. Functionally, cofactor for serine ADP-ribosylation that confers serine specificity on PARP1 and PARP2 and plays a key role in DNA damage response. Initiates the repair of double-strand DNA breaks: recruited to DNA damage sites by PARP1 and PARP2 and switches the amino acid specificity of PARP1 and PARP2 from aspartate or glutamate to serine residues, licensing serine ADP-ribosylation of target proteins. Serine ADP-ribosylation of target proteins, such as histones, promotes decompaction of chromatin and the recruitment of repair factors leading to the reparation of DNA strand breaks. Serine ADP-ribosylation of proteins constitutes the primary form of ADP-ribosylation of proteins in response to DNA damage. HPF1 acts by completing the active site of PARP1 and PARP2: forms a composite active site composed of residues from HPF1 and PARP1 or PARP2. While HPF1 promotes the initiation of serine ADP-ribosylation, it restricts the polymerase activity of PARP1 and PARP2 in order to limit the length of poly-ADP-ribose chains. HPF1 also promotes tyrosine ADP-ribosylation, probably by conferring tyrosine specificity on PARP1. This is Histone PARylation factor 1 from Bos taurus (Bovine).